A 159-amino-acid chain; its full sequence is Small ribosomal subunit protein uS4 (159 aa).

The S4 RNA-binding domain occupies 106-158 (RRLQTLVFRMGLAKSIHHARQLVVHGHVLVAGRRVTSPGFLVPRELEDKITIE).

The protein belongs to the universal ribosomal protein uS4 family. In terms of assembly, part of the 30S ribosomal subunit. Contacts protein S5. The interaction surface between S4 and S5 is involved in control of translational fidelity.

In terms of biological role, one of the primary rRNA binding proteins, it binds directly to 16S rRNA where it nucleates assembly of the body of the 30S subunit. Its function is as follows. With S5 and S12 plays an important role in translational accuracy. The sequence is that of Small ribosomal subunit protein uS4 from Pyrobaculum calidifontis (strain DSM 21063 / JCM 11548 / VA1).